We begin with the raw amino-acid sequence, 225 residues long: Small ribosomal subunit protein uS3 (225 aa).

The KH type-2 domain occupies Ile-39–Asn-109.

Belongs to the universal ribosomal protein uS3 family. Part of the 30S ribosomal subunit. Forms a tight complex with proteins S10 and S14.

Binds the lower part of the 30S subunit head. Binds mRNA in the 70S ribosome, positioning it for translation. This is Small ribosomal subunit protein uS3 from Mycoplasma mobile (strain ATCC 43663 / 163K / NCTC 11711) (Mesomycoplasma mobile).